We begin with the raw amino-acid sequence, 145 residues long: Superoxide dismutase [Mn/Fe] (145 aa).

Residues histidine 10 and histidine 64 each coordinate Fe(3+). Mn(2+)-binding residues include histidine 10 and histidine 64.

It belongs to the iron/manganese superoxide dismutase family. The cofactor is Mn(2+). It depends on Fe(3+) as a cofactor.

It carries out the reaction 2 superoxide + 2 H(+) = H2O2 + O2. Its function is as follows. Destroys superoxide anion radicals which are normally produced within the cells and which are toxic to biological systems. Catalyzes the dismutation of superoxide anion radicals into O2 and H2O2 by successive reduction and oxidation of the transition metal ion at the active site. The polypeptide is Superoxide dismutase [Mn/Fe] (sodA) (Streptococcus canis).